Reading from the N-terminus, the 286-residue chain is Polyamine aminopropyltransferase (286 aa).

In terms of domain architecture, PABS spans 2-237 (DLWFSEVHTP…GYWLFGFASK (236 aa)). Residue glutamine 31 participates in S-methyl-5'-thioadenosine binding. Position 86 (aspartate 86) interacts with spermidine. Residues glutamate 106 and 137–138 (NG) contribute to the S-methyl-5'-thioadenosine site. Residue aspartate 155 is the Proton acceptor of the active site.

It belongs to the spermidine/spermine synthase family. In terms of assembly, homodimer or homotetramer.

The protein resides in the cytoplasm. The catalysed reaction is S-adenosyl 3-(methylsulfanyl)propylamine + putrescine = S-methyl-5'-thioadenosine + spermidine + H(+). It participates in amine and polyamine biosynthesis; spermidine biosynthesis; spermidine from putrescine: step 1/1. Functionally, catalyzes the irreversible transfer of a propylamine group from the amino donor S-adenosylmethioninamine (decarboxy-AdoMet) to putrescine (1,4-diaminobutane) to yield spermidine. The sequence is that of Polyamine aminopropyltransferase from Streptococcus pneumoniae serotype 4 (strain ATCC BAA-334 / TIGR4).